The primary structure comprises 211 residues: Glycerol-3-phosphate acyltransferase (211 aa).

A run of 5 helical transmembrane segments spans residues 5-25, 58-78, 80-100, 112-132, and 138-158; these read ALGMMLIAYLCGSVSSAILFC, VLVFDILKGMLPVWGAYALGV, PLYLGLTAIAACLGHIYPVFF, LGAIAPIGLDLTGLMTGTWLL, and GYSSLGAIVSALIAPFYVWWF.

It belongs to the PlsY family. As to quaternary structure, probably interacts with PlsX.

It is found in the cell inner membrane. The enzyme catalyses an acyl phosphate + sn-glycerol 3-phosphate = a 1-acyl-sn-glycero-3-phosphate + phosphate. Its pathway is lipid metabolism; phospholipid metabolism. Functionally, catalyzes the transfer of an acyl group from acyl-phosphate (acyl-PO(4)) to glycerol-3-phosphate (G3P) to form lysophosphatidic acid (LPA). This enzyme utilizes acyl-phosphate as fatty acyl donor, but not acyl-CoA or acyl-ACP. In Pectobacterium atrosepticum (strain SCRI 1043 / ATCC BAA-672) (Erwinia carotovora subsp. atroseptica), this protein is Glycerol-3-phosphate acyltransferase.